Reading from the N-terminus, the 907-residue chain is Eukaryotic translation initiation factor 4 gamma 2 (907 aa).

N-acetylmethionine is present on methionine 1. Positions 1–71 (MESAIAEGGA…SAANNSANEK (71 aa)) are disordered. Serine 11 carries the post-translational modification Phosphoserine. The region spanning 78–308 (FRKVRGILNK…QDTVELREHH (231 aa)) is the MIF4G domain. At threonine 89 the chain carries Phosphothreonine. The residue at position 360 (arginine 360) is an Omega-N-methylarginine. At serine 395 the chain carries Phosphoserine. An N6-methyllysine modification is found at lysine 431. Serine 443 carries the phosphoserine modification. The interval 498 to 541 (PPSAQPPRTQTPPLGQTPQLGLKTNPPLIQEKPAKTSKKPPPSK) is disordered. Positions 503–516 (PPRTQTPPLGQTPQ) are enriched in polar residues. An Omega-N-methylarginine modification is found at arginine 505. Phosphothreonine occurs at positions 508 and 514. Residues 543-666 (ELLKLTETVV…SISELAQPLE (124 aa)) form the MI domain. Lysine 575 participates in a covalent cross-link: Glycyl lysine isopeptide (Lys-Gly) (interchain with G-Cter in SUMO2). Positions 720–904 (EGKGLSFLFP…ETAEEEESEE (185 aa)) constitute a W2 domain. Serine 902 carries the post-translational modification Phosphoserine.

This sequence belongs to the eukaryotic initiation factor 4G family. Interacts with the serine/threonine protein kinases MKNK1 and MKNK2. Binds EIF4A and EIF3. Interacts with MIF4GD. Interacts with DAZAP2. Post-translationally, phosphorylation; hyperphosphorylated during mitosis.

Functionally, appears to play a role in the switch from cap-dependent to IRES-mediated translation during mitosis, apoptosis and viral infection. Cleaved by some caspases and viral proteases. The protein is Eukaryotic translation initiation factor 4 gamma 2 (EIF4G2) of Bos taurus (Bovine).